Reading from the N-terminus, the 541-residue chain is Zinc finger CCHC domain-containing protein 7 (541 aa).

The interval 111–144 (AEEKTQSPATSHSNKVAQKCKRNNKKPKPEERPG) is disordered. The span at 116 to 126 (QSPATSHSNKV) shows a compositional bias: polar residues. Residues Lys129, Lys136, Lys138, Lys234, and Lys249 each participate in a glycyl lysine isopeptide (Lys-Gly) (interchain with G-Cter in SUMO2) cross-link. 3 CCHC-type zinc fingers span residues 236–253 (VTCRNCDKRGHLSKNCPL), 258–275 (RACCLCSERGHLQYGCPA), and 299–316 (KRCDRCDMIGHHADACPE). A Glycyl lysine isopeptide (Lys-Gly) (interchain with G-Cter in SUMO2) cross-link involves residue Lys334. The CCHC-type 4 zinc finger occupies 343–360 (VYCYNCAQKGHYGHECTE). Positions 394-541 (VKDLKKNGDF…KKKKPKPSGL (148 aa)) are disordered. Residues Lys408 and Lys431 each participate in a glycyl lysine isopeptide (Lys-Gly) (interchain with G-Cter in SUMO2) cross-link. Basic residues predominate over residues 418–434 (RRHHDMRKSRSPRKYRR). Residues 435 to 452 (WPRENKETQKEKTRSREG) are compositionally biased toward basic and acidic residues. Lys473 participates in a covalent cross-link: Glycyl lysine isopeptide (Lys-Gly) (interchain with G-Cter in SUMO2). The span at 474 to 486 (PNASGCANNQKPS) shows a compositional bias: polar residues. Ser477 is subject to Phosphoserine. Glycyl lysine isopeptide (Lys-Gly) (interchain with G-Cter in SUMO2) cross-links involve residues Lys484 and Lys487. A compositionally biased stretch (basic residues) spans 487–497 (KSLHHASHYHR). Basic and acidic residues-rich tracts occupy residues 498 to 509 (LREERLLRESKR) and 517 to 527 (STEDGSHDDLF). A Glycyl lysine isopeptide (Lys-Gly) (interchain with G-Cter in SUMO2) cross-link involves residue Lys530. Positions 530 to 541 (KQKKKKPKPSGL) are enriched in basic residues.

In terms of assembly, component of a nucleolar TRAMP-like complex, an ATP-dependent exosome regulatory complex consisting of a helicase (MTREX), an oligadenylate polymerase (TENT4B or TENT4A), and a substrate specific RNA-binding factor (ZCCHC7 or ZCCHC8). Several TRAMP-like complexes exist with specific compositions and are associated with nuclear, or nucleolar RNA exosomes.

It is found in the nucleus. It localises to the nucleolus. The chain is Zinc finger CCHC domain-containing protein 7 (Zcchc7) from Mus musculus (Mouse).